The chain runs to 282 residues: 3-hydroxyanthranilate 3,4-dioxygenase (282 aa).

The segment at 1–160 is domain A (catalytic); it reads MAMAINVKKW…SKQYKSGKPD (160 aa). Position 43 (R43) interacts with O2. The Fe cation site is built by H47, E53, and H91. Residue E53 participates in substrate binding. Residues R95 and E105 each contribute to the substrate site. The linker stretch occupies residues 161–177; the sequence is PDQPKAKMPFCLSTEQV. Positions 178–282 are domain B; sequence MEPFSFQHWL…LSTSQVPLPM (105 aa).

This sequence belongs to the 3-HAO family. Monomer. Requires Fe(2+) as cofactor.

The protein localises to the cytoplasm. It is found in the cytosol. The catalysed reaction is 3-hydroxyanthranilate + O2 = (2Z,4Z)-2-amino-3-carboxymuconate 6-semialdehyde. It functions in the pathway cofactor biosynthesis; NAD(+) biosynthesis; quinolinate from L-kynurenine: step 3/3. Catalyzes the oxidative ring opening of 3-hydroxyanthranilate to 2-amino-3-carboxymuconate semialdehyde, which spontaneously cyclizes to quinolinate. This is 3-hydroxyanthranilate 3,4-dioxygenase (haao) from Xenopus laevis (African clawed frog).